The primary structure comprises 74 residues: Probable tetrachloroethene reductive dehalogenase membrane anchor protein (74 aa).

2 helical membrane passes run 11–31 and 40–60; these read ALGL…ISMG and AGSI…FLLM.

This sequence belongs to the PceB family.

It is found in the cell inner membrane. In terms of biological role, may act as a membrane anchor for the tetrachloroethene reductive dehalogenase PceA. The sequence is that of Probable tetrachloroethene reductive dehalogenase membrane anchor protein from Sulfurospirillum multivorans (Dehalospirillum multivorans).